A 116-amino-acid chain; its full sequence is MSKYAIIETGGQQLRVEPGRFYNIRHFVSLTPNELEQNTKILIYRVLMIRQESTIKMGHPWLKGAIVKGRILHSCLEKKITIYKMISKKKTRRKLGHRQKSTRFIVDSIFLNGKEI.

This sequence belongs to the bacterial ribosomal protein bL21 family. As to quaternary structure, part of the 50S ribosomal subunit.

Its subcellular location is the plastid. It localises to the chloroplast. Its function is as follows. This protein binds to 23S rRNA. The chain is Large ribosomal subunit protein bL21c from Marchantia polymorpha (Common liverwort).